The sequence spans 113 residues: FK506-binding protein 1B (113 aa).

One can recognise a PPIase FKBP-type domain in the interval 19-113; that stretch reads GQTVVIEYTG…IFDVYLKGLQ (95 aa).

It belongs to the FKBP-type PPIase family. FKBP1 subfamily.

Its subcellular location is the cytoplasm. The catalysed reaction is [protein]-peptidylproline (omega=180) = [protein]-peptidylproline (omega=0). Its activity is regulated as follows. Inhibited by both FK506 and rapamycin. Its function is as follows. PPIases accelerate the folding of proteins. It catalyzes the cis-trans isomerization of proline imidic peptide bonds in oligopeptides. The protein is FK506-binding protein 1B (fkr-3) of Neurospora crassa (strain ATCC 24698 / 74-OR23-1A / CBS 708.71 / DSM 1257 / FGSC 987).